Reading from the N-terminus, the 187-residue chain is MIVIVGLGNPGRKYAKTRHNVGFMVVDELARKYGLVFKEKNDYYITEWRLENKDITIIKPTTYMNLSGTAVKKVVNEKILKNLPESLIVIHDDVDMPLGKIKIKKNGSSGGHKGVQSIIDSLGTKDFIRIKIGIGKNPYQDVSEYVLSPFTSEQRAKIQEKISEAVESIVVIINEGVNKAMNIYNRL.

Y14 is a binding site for tRNA. The active-site Proton acceptor is the H19. Residues Y63 and N65 each coordinate tRNA.

Belongs to the PTH family. As to quaternary structure, monomer.

Its subcellular location is the cytoplasm. It carries out the reaction an N-acyl-L-alpha-aminoacyl-tRNA + H2O = an N-acyl-L-amino acid + a tRNA + H(+). Its function is as follows. Hydrolyzes ribosome-free peptidyl-tRNAs (with 1 or more amino acids incorporated), which drop off the ribosome during protein synthesis, or as a result of ribosome stalling. Functionally, catalyzes the release of premature peptidyl moieties from peptidyl-tRNA molecules trapped in stalled 50S ribosomal subunits, and thus maintains levels of free tRNAs and 50S ribosomes. This chain is Peptidyl-tRNA hydrolase, found in Thermodesulfovibrio yellowstonii (strain ATCC 51303 / DSM 11347 / YP87).